The chain runs to 179 residues: Large ribosomal subunit protein uL5 (179 aa).

It belongs to the universal ribosomal protein uL5 family. As to quaternary structure, part of the 50S ribosomal subunit; part of the 5S rRNA/L5/L18/L25 subcomplex. Contacts the 5S rRNA and the P site tRNA. Forms a bridge to the 30S subunit in the 70S ribosome.

This is one of the proteins that bind and probably mediate the attachment of the 5S RNA into the large ribosomal subunit, where it forms part of the central protuberance. In the 70S ribosome it contacts protein S13 of the 30S subunit (bridge B1b), connecting the 2 subunits; this bridge is implicated in subunit movement. Contacts the P site tRNA; the 5S rRNA and some of its associated proteins might help stabilize positioning of ribosome-bound tRNAs. This is Large ribosomal subunit protein uL5 from Synechococcus sp. (strain CC9311).